Here is a 159-residue protein sequence, read N- to C-terminus: Transcription elongation factor GreA (159 aa).

Residues 47 to 77 adopt a coiled-coil conformation; it reads SENAEYDAARDKQATIENEITEIQHILDNYE.

It belongs to the GreA/GreB family.

Necessary for efficient RNA polymerase transcription elongation past template-encoded arresting sites. The arresting sites in DNA have the property of trapping a certain fraction of elongating RNA polymerases that pass through, resulting in locked ternary complexes. Cleavage of the nascent transcript by cleavage factors such as GreA or GreB allows the resumption of elongation from the new 3'terminus. GreA releases sequences of 2 to 3 nucleotides. In Metamycoplasma arthritidis (strain 158L3-1) (Mycoplasma arthritidis), this protein is Transcription elongation factor GreA.